A 194-amino-acid chain; its full sequence is Probable molybdenum cofactor guanylyltransferase (194 aa).

GTP contacts are provided by residues 8–10 (LAG), K20, and D99. D99 contacts Mg(2+).

It belongs to the MobA family. The cofactor is Mg(2+).

It is found in the cytoplasm. It carries out the reaction Mo-molybdopterin + GTP + H(+) = Mo-molybdopterin guanine dinucleotide + diphosphate. Functionally, transfers a GMP moiety from GTP to Mo-molybdopterin (Mo-MPT) cofactor (Moco or molybdenum cofactor) to form Mo-molybdopterin guanine dinucleotide (Mo-MGD) cofactor. The polypeptide is Probable molybdenum cofactor guanylyltransferase (Synechococcus elongatus (strain ATCC 33912 / PCC 7942 / FACHB-805) (Anacystis nidulans R2)).